A 299-amino-acid chain; its full sequence is uncharacterized protein (299 aa).

This is an uncharacterized protein from Escherichia coli (strain K12).